A 97-amino-acid polypeptide reads, in one-letter code: MENNISNVRIHLHRKCDVNEQDIYGKTALHYAYTKRNIDIIKILLKCPGIKICIKDNDDYTPVDLICSTISSYIASSLENKIDEVDKLGETPHYENG.

Residues 24-54 form an ANK repeat; the sequence is YGKTALHYAYTKRNIDIIKILLKCPGIKICI.

This chain is Putative ankyrin repeat protein RBE_0357, found in Rickettsia bellii (strain RML369-C).